Reading from the N-terminus, the 364-residue chain is Aminomethyltransferase (364 aa).

It belongs to the GcvT family. In terms of assembly, the glycine cleavage system is composed of four proteins: P, T, L and H.

It carries out the reaction N(6)-[(R)-S(8)-aminomethyldihydrolipoyl]-L-lysyl-[protein] + (6S)-5,6,7,8-tetrahydrofolate = N(6)-[(R)-dihydrolipoyl]-L-lysyl-[protein] + (6R)-5,10-methylene-5,6,7,8-tetrahydrofolate + NH4(+). The glycine cleavage system catalyzes the degradation of glycine. The chain is Aminomethyltransferase from Desulforamulus reducens (strain ATCC BAA-1160 / DSM 100696 / MI-1) (Desulfotomaculum reducens).